The primary structure comprises 128 residues: Small nuclear ribonucleoprotein associated homolog 13 (128 aa).

This sequence belongs to the eukaryotic ribosomal protein eL8 family.

The protein localises to the nucleus. It is found in the nucleolus. Functionally, binds to the 5'-stem-loop of U4 snRNA and may play a role in the late stage of spliceosome assembly. The protein undergoes a conformational change upon RNA-binding. The polypeptide is Small nuclear ribonucleoprotein associated homolog 13 (Caenorhabditis elegans).